We begin with the raw amino-acid sequence, 931 residues long: Ribosome-releasing factor 2, mitochondrial (931 aa).

One can recognise a tr-type G domain in the interval 63–379; it reads EKTRNIGIIA…AVNNLLPGPS (317 aa). Residues 72 to 79, 162 to 166, and 216 to 219 contribute to the GTP site; these read AHIDAGKT, DTPGH, and NKLD.

It belongs to the TRAFAC class translation factor GTPase superfamily. Classic translation factor GTPase family. EF-G/EF-2 subfamily.

It is found in the mitochondrion. In terms of biological role, mitochondrial GTPase that mediates the disassembly of ribosomes from messenger RNA at the termination of mitochondrial protein biosynthesis. Not involved in the GTP-dependent ribosomal translocation step during translation elongation. In Talaromyces stipitatus (strain ATCC 10500 / CBS 375.48 / QM 6759 / NRRL 1006) (Penicillium stipitatum), this protein is Ribosome-releasing factor 2, mitochondrial (mef2).